A 128-amino-acid chain; its full sequence is Disintegrin lebein-2-alpha (128 aa).

The N-terminal stretch at 1–20 (MIQVLLVTICLAVFPFHGSS) is a signal peptide. Residues 21 to 46 (IILESGNVNDYEVVYPKKVTLLPTGA) constitute a propeptide that is removed on maturation. The region spanning 47-111 (MNSANPCCDP…SDCPRNPWKS (65 aa)) is the Disintegrin domain. 4 cysteine pairs are disulfide-bonded: cysteine 53/cysteine 76, cysteine 67/cysteine 73, cysteine 72/cysteine 97, and cysteine 85/cysteine 104. Positions 89–91 (MLD) match the Cell attachment site; atypical (MLD) motif. Positions 112–128 (EEDEMKWSATAKGSVLM) are excised as a propeptide.

It belongs to the disintegrin family. Dimeric disintegrin subfamily. As to quaternary structure, heterodimer with subunit beta; disulfide-linked. Expressed by the venom gland.

It is found in the secreted. Functionally, inhibits ADP-induced human platelet aggregation. Antagonist of alpha-IIb/beta-3 (ITGA2B/ITGB3). Also avidly binds to the laminin-binding beta-1 integrins (alpha-3/beta-1 (ITGA3/ITGB1), alpha-6/beta-1 (ITGA6/ITGB1), and alpha-7/beta-1 (ITGA7/ITGB1)) in an RGD-independent manner. This is Disintegrin lebein-2-alpha from Macrovipera lebetinus (Levantine viper).